The primary structure comprises 425 residues: Serine--tRNA ligase (425 aa).

230–232 contributes to the L-serine binding site; sequence TAE. 261–263 serves as a coordination point for ATP; the sequence is RSE. An L-serine-binding site is contributed by E284. Residue 348–351 participates in ATP binding; it reads EISS. S384 contributes to the L-serine binding site.

This sequence belongs to the class-II aminoacyl-tRNA synthetase family. Type-1 seryl-tRNA synthetase subfamily. In terms of assembly, homodimer. The tRNA molecule binds across the dimer.

Its subcellular location is the cytoplasm. The catalysed reaction is tRNA(Ser) + L-serine + ATP = L-seryl-tRNA(Ser) + AMP + diphosphate + H(+). It carries out the reaction tRNA(Sec) + L-serine + ATP = L-seryl-tRNA(Sec) + AMP + diphosphate + H(+). Its pathway is aminoacyl-tRNA biosynthesis; selenocysteinyl-tRNA(Sec) biosynthesis; L-seryl-tRNA(Sec) from L-serine and tRNA(Sec): step 1/1. In terms of biological role, catalyzes the attachment of serine to tRNA(Ser). Is also able to aminoacylate tRNA(Sec) with serine, to form the misacylated tRNA L-seryl-tRNA(Sec), which will be further converted into selenocysteinyl-tRNA(Sec). This Streptococcus equi subsp. equi (strain 4047) protein is Serine--tRNA ligase.